A 248-amino-acid polypeptide reads, in one-letter code: Triosephosphate isomerase (248 aa).

The D-glyceraldehyde 3-phosphate site is built by N10 and K12. H95 functions as the Electrophile in the catalytic mechanism. E165 serves as the catalytic Proton acceptor. D-glyceraldehyde 3-phosphate is bound by residues G171, L230, and 232–233; that span reads GN.

Belongs to the triosephosphate isomerase family. Homodimer.

It carries out the reaction D-glyceraldehyde 3-phosphate = dihydroxyacetone phosphate. It functions in the pathway carbohydrate biosynthesis; gluconeogenesis. Its pathway is carbohydrate degradation; glycolysis; D-glyceraldehyde 3-phosphate from glycerone phosphate: step 1/1. Its function is as follows. Catalyzes the interconversion of glyceraldehyde 3-phosphate and dihydroxyacetone phosphate in the glycolytic and gluconeogenic pathways. The sequence is that of Triosephosphate isomerase from Plasmodium falciparum (isolate 3D7).